A 178-amino-acid polypeptide reads, in one-letter code: Large ribosomal subunit protein uL6 (178 aa).

It belongs to the universal ribosomal protein uL6 family. Part of the 50S ribosomal subunit.

This protein binds to the 23S rRNA, and is important in its secondary structure. It is located near the subunit interface in the base of the L7/L12 stalk, and near the tRNA binding site of the peptidyltransferase center. The polypeptide is Large ribosomal subunit protein uL6 (Paenarthrobacter aurescens (strain TC1)).